A 365-amino-acid polypeptide reads, in one-letter code: Sesquiterpene synthase 3 (365 aa).

Mg(2+) is bound by residues Asp117, Asn253, Ser257, and Glu261. The short motif at 117–121 (DDWSD) is the DDXXD motif element. The short motif at 253-261 (NDILSYNRE) is the NSE/DTE motif element. Positions 341 and 342 each coordinate (2E,6E)-farnesyl diphosphate.

Belongs to the terpene synthase family. It depends on Mg(2+) as a cofactor.

It catalyses the reaction (2E,6E)-farnesyl diphosphate = delta-cadinene + diphosphate. Terpene cyclase that catalyzes the cyclization of farnesyl diphosphate (FPP) to various sesquiterpenes, including beta-elemene gamma-cadinene, delta-cadinene, and alpha-cadinene. The sequence is that of Sesquiterpene synthase 3 from Postia placenta (strain ATCC 44394 / Madison 698-R) (Brown rot fungus).